Reading from the N-terminus, the 313-residue chain is Aspartate carbamoyltransferase catalytic subunit (313 aa).

2 residues coordinate carbamoyl phosphate: R58 and T59. Position 86 (K86) interacts with L-aspartate. Residues R108, H136, and Q139 each coordinate carbamoyl phosphate. Residues R169 and R223 each coordinate L-aspartate. Carbamoyl phosphate contacts are provided by G265 and P266.

This sequence belongs to the aspartate/ornithine carbamoyltransferase superfamily. ATCase family. As to quaternary structure, heterododecamer (2C3:3R2) of six catalytic PyrB chains organized as two trimers (C3), and six regulatory PyrI chains organized as three dimers (R2).

It catalyses the reaction carbamoyl phosphate + L-aspartate = N-carbamoyl-L-aspartate + phosphate + H(+). The protein operates within pyrimidine metabolism; UMP biosynthesis via de novo pathway; (S)-dihydroorotate from bicarbonate: step 2/3. In terms of biological role, catalyzes the condensation of carbamoyl phosphate and aspartate to form carbamoyl aspartate and inorganic phosphate, the committed step in the de novo pyrimidine nucleotide biosynthesis pathway. The chain is Aspartate carbamoyltransferase catalytic subunit from Anaeromyxobacter dehalogenans (strain 2CP-C).